Consider the following 151-residue polypeptide: 6,7-dimethyl-8-ribityllumazine synthase (151 aa).

Residues Phe15, 49-51 (AVE), and 73-75 (AVI) contribute to the 5-amino-6-(D-ribitylamino)uracil site. 78–79 (ET) is a binding site for (2S)-2-hydroxy-3-oxobutyl phosphate. The active-site Proton donor is the His81. Position 106 (Phe106) interacts with 5-amino-6-(D-ribitylamino)uracil. Arg120 is a binding site for (2S)-2-hydroxy-3-oxobutyl phosphate.

Belongs to the DMRL synthase family. In terms of assembly, forms an icosahedral capsid composed of 60 subunits, arranged as a dodecamer of pentamers.

The enzyme catalyses (2S)-2-hydroxy-3-oxobutyl phosphate + 5-amino-6-(D-ribitylamino)uracil = 6,7-dimethyl-8-(1-D-ribityl)lumazine + phosphate + 2 H2O + H(+). It functions in the pathway cofactor biosynthesis; riboflavin biosynthesis; riboflavin from 2-hydroxy-3-oxobutyl phosphate and 5-amino-6-(D-ribitylamino)uracil: step 1/2. Its function is as follows. Catalyzes the formation of 6,7-dimethyl-8-ribityllumazine by condensation of 5-amino-6-(D-ribitylamino)uracil with 3,4-dihydroxy-2-butanone 4-phosphate. This is the penultimate step in the biosynthesis of riboflavin. This chain is 6,7-dimethyl-8-ribityllumazine synthase, found in Coxiella burnetii (strain Dugway 5J108-111).